A 436-amino-acid chain; its full sequence is 3-ketoacyl-CoA thiolase (436 aa).

The active-site Acyl-thioester intermediate is the Cys99. Catalysis depends on proton acceptor residues His392 and Cys422.

It belongs to the thiolase-like superfamily. Thiolase family. As to quaternary structure, heterotetramer of two alpha chains (FadJ) and two beta chains (FadI).

Its subcellular location is the cytoplasm. It carries out the reaction an acyl-CoA + acetyl-CoA = a 3-oxoacyl-CoA + CoA. It functions in the pathway lipid metabolism; fatty acid beta-oxidation. Functionally, catalyzes the final step of fatty acid oxidation in which acetyl-CoA is released and the CoA ester of a fatty acid two carbons shorter is formed. The sequence is that of 3-ketoacyl-CoA thiolase from Salmonella paratyphi B (strain ATCC BAA-1250 / SPB7).